A 420-amino-acid chain; its full sequence is Serine hydroxymethyltransferase (420 aa).

Residues Leu-121 and 125–127 contribute to the (6S)-5,6,7,8-tetrahydrofolate site; that span reads GHL. At Lys-230 the chain carries N6-(pyridoxal phosphate)lysine. (6S)-5,6,7,8-tetrahydrofolate-binding positions include Glu-246 and 354-356; that span reads SPF.

Belongs to the SHMT family. As to quaternary structure, homodimer. The cofactor is pyridoxal 5'-phosphate.

It localises to the cytoplasm. It carries out the reaction (6R)-5,10-methylene-5,6,7,8-tetrahydrofolate + glycine + H2O = (6S)-5,6,7,8-tetrahydrofolate + L-serine. It participates in one-carbon metabolism; tetrahydrofolate interconversion. Its pathway is amino-acid biosynthesis; glycine biosynthesis; glycine from L-serine: step 1/1. Catalyzes the reversible interconversion of serine and glycine with tetrahydrofolate (THF) serving as the one-carbon carrier. This reaction serves as the major source of one-carbon groups required for the biosynthesis of purines, thymidylate, methionine, and other important biomolecules. Also exhibits THF-independent aldolase activity toward beta-hydroxyamino acids, producing glycine and aldehydes, via a retro-aldol mechanism. This Rickettsia akari (strain Hartford) protein is Serine hydroxymethyltransferase.